The following is a 101-amino-acid chain: Parathymosin (101 aa).

The tract at residues 1-101 is disordered; the sequence is MSEKSVEAAA…RQKTENGASA (101 aa). Position 2 is an N-acetylserine (Ser2). Residue Ser2 is modified to Phosphoserine. An N6-acetyllysine modification is found at Lys4. 2 positions are modified to phosphoserine: Ser5 and Ser13. Positions 13–37 are enriched in basic and acidic residues; it reads SAKDLKEKKDKVEEKAGRKERKKEV. Lys15 carries the post-translational modification N6-acetyllysine. Acidic residues predominate over residues 38-74; it reads VEEEENGAEEEEEETAEDGEDDDEGDEEDEEEEEEDE. A Phosphothreonine modification is found at Thr52. Lys91 is modified (N6-acetyllysine).

Belongs to the pro/parathymosin family.

Functionally, parathymosin may mediate immune function by blocking the effect of prothymosin alpha which confers resistance to certain opportunistic infections. This chain is Parathymosin (Ptms), found in Mus musculus (Mouse).